The primary structure comprises 137 residues: Cell division protein SepF (137 aa).

The protein belongs to the SepF family. In terms of assembly, homodimer. Interacts with FtsZ.

It localises to the cytoplasm. Its function is as follows. Cell division protein that is part of the divisome complex and is recruited early to the Z-ring. Probably stimulates Z-ring formation, perhaps through the cross-linking of FtsZ protofilaments. Its function overlaps with FtsA. The chain is Cell division protein SepF from Thermoanaerobacter pseudethanolicus (strain ATCC 33223 / 39E) (Clostridium thermohydrosulfuricum).